The sequence spans 417 residues: Creatine kinase U-type, mitochondrial (417 aa).

Residues 1-39 constitute a mitochondrion transit peptide; sequence MAGPFSRLLSARPGLRLLALAGAGSLAAGFLLRPEPVRA. The interval 40–64 is cardiolipin-binding; that stretch reads ASERRRLYPPSAEYPDLRKHNNCMA. Positions 45 to 131 constitute a Phosphagen kinase N-terminal domain; it reads RLYPPSAEYP…FDPVIQERHN (87 aa). The residue at position 151 (serine 151) is a Phosphoserine. Positions 158–400 constitute a Phosphagen kinase C-terminal domain; that stretch reads YVLSSRVRTG…NYLIDCERRL (243 aa). 161–165 contributes to the ATP binding site; it reads SSRVR. The residue at position 196 (serine 196) is a Phosphoserine. Position 213 is a phosphothreonine (threonine 213). Histidine 224 contributes to the ATP binding site. Serine 232 is subject to Phosphoserine. ATP contacts are provided by residues arginine 269, arginine 325, 353–358, and aspartate 368; that span reads RGTGGV. Threonine 355 bears the Phosphothreonine mark.

The protein belongs to the ATP:guanido phosphotransferase family. In terms of assembly, exists as an octamer composed of four MTCK homodimers.

The protein resides in the mitochondrion inner membrane. It catalyses the reaction creatine + ATP = N-phosphocreatine + ADP + H(+). In terms of biological role, reversibly catalyzes the transfer of phosphate between ATP and various phosphogens (e.g. creatine phosphate). Creatine kinase isoenzymes play a central role in energy transduction in tissues with large, fluctuating energy demands, such as skeletal muscle, heart, brain and spermatozoa. This is Creatine kinase U-type, mitochondrial (CKMT1A) from Homo sapiens (Human).